Reading from the N-terminus, the 405-residue chain is Tryptophan synthase beta chain (405 aa).

At K98 the chain carries N6-(pyridoxal phosphate)lysine.

The protein belongs to the TrpB family. Tetramer of two alpha and two beta chains. It depends on pyridoxal 5'-phosphate as a cofactor.

The enzyme catalyses (1S,2R)-1-C-(indol-3-yl)glycerol 3-phosphate + L-serine = D-glyceraldehyde 3-phosphate + L-tryptophan + H2O. The protein operates within amino-acid biosynthesis; L-tryptophan biosynthesis; L-tryptophan from chorismate: step 5/5. Its function is as follows. The beta subunit is responsible for the synthesis of L-tryptophan from indole and L-serine. The polypeptide is Tryptophan synthase beta chain (Stenotrophomonas maltophilia (strain K279a)).